Reading from the N-terminus, the 69-residue chain is Putative membrane protein insertion efficiency factor (69 aa).

It belongs to the UPF0161 family.

The protein resides in the cell membrane. Functionally, could be involved in insertion of integral membrane proteins into the membrane. This is Putative membrane protein insertion efficiency factor from Alkaliphilus oremlandii (strain OhILAs) (Clostridium oremlandii (strain OhILAs)).